Consider the following 377-residue polypeptide: UPF0754 membrane protein GK0639 (377 aa).

Helical transmembrane passes span 7-27 (LLFMVAVGALIGGVTNFIAIV) and 357-377 (YLGALLGGLIGAVQGVIGLWL).

It belongs to the UPF0754 family.

The protein localises to the cell membrane. This chain is UPF0754 membrane protein GK0639, found in Geobacillus kaustophilus (strain HTA426).